A 169-amino-acid polypeptide reads, in one-letter code: 6,7-dimethyl-8-ribityllumazine synthase (169 aa).

5-amino-6-(D-ribitylamino)uracil is bound by residues tyrosine 30, 61–63 (ALE), and 90–92 (CVI). (2S)-2-hydroxy-3-oxobutyl phosphate is bound at residue 95-96 (ET). The active-site Proton donor is histidine 98. Residue asparagine 123 coordinates 5-amino-6-(D-ribitylamino)uracil. Arginine 137 contacts (2S)-2-hydroxy-3-oxobutyl phosphate.

This sequence belongs to the DMRL synthase family.

It catalyses the reaction (2S)-2-hydroxy-3-oxobutyl phosphate + 5-amino-6-(D-ribitylamino)uracil = 6,7-dimethyl-8-(1-D-ribityl)lumazine + phosphate + 2 H2O + H(+). The protein operates within cofactor biosynthesis; riboflavin biosynthesis; riboflavin from 2-hydroxy-3-oxobutyl phosphate and 5-amino-6-(D-ribitylamino)uracil: step 1/2. Catalyzes the formation of 6,7-dimethyl-8-ribityllumazine by condensation of 5-amino-6-(D-ribitylamino)uracil with 3,4-dihydroxy-2-butanone 4-phosphate. This is the penultimate step in the biosynthesis of riboflavin. The polypeptide is 6,7-dimethyl-8-ribityllumazine synthase (Methylorubrum populi (strain ATCC BAA-705 / NCIMB 13946 / BJ001) (Methylobacterium populi)).